Here is a 91-residue protein sequence, read N- to C-terminus: Cytochrome b-c1 complex subunit 6, mitochondrial (91 aa).

Residues methionine 1 to leucine 10 are compositionally biased toward basic and acidic residues. The N-terminal 13 residues, methionine 1–serine 13, are a transit peptide targeting the mitochondrion. Positions methionine 1–leucine 30 are disordered. A compositionally biased stretch (acidic residues) spans glutamate 17–valine 27. Disulfide bonds link cysteine 37-cysteine 81 and cysteine 53-cysteine 67. The residue at position 42 (lysine 42) is an N6-acetyllysine. At lysine 85 the chain carries N6-acetyllysine.

This sequence belongs to the UQCRH/QCR6 family. In terms of assembly, component of the ubiquinol-cytochrome c oxidoreductase (cytochrome b-c1 complex, complex III, CIII), a multisubunit enzyme composed of 11 subunits. The complex is composed of 3 respiratory subunits cytochrome b, cytochrome c1 and Rieske protein UQCRFS1, 2 core protein subunits UQCRC1/QCR1 and UQCRC2/QCR2, and 6 low-molecular weight protein subunits UQCRH/QCR6, UQCRB/QCR7, UQCRQ/QCR8, UQCR10/QCR9, UQCR11/QCR10 and subunit 9, the cleavage product of Rieske protein UQCRFS1. The complex exists as an obligatory dimer and forms supercomplexes (SCs) in the inner mitochondrial membrane with NADH-ubiquinone oxidoreductase (complex I, CI) and cytochrome c oxidase (complex IV, CIV), resulting in different assemblies (supercomplex SCI(1)III(2)IV(1) and megacomplex MCI(2)III(2)IV(2)).

It is found in the mitochondrion inner membrane. Functionally, component of the ubiquinol-cytochrome c oxidoreductase, a multisubunit transmembrane complex that is part of the mitochondrial electron transport chain which drives oxidative phosphorylation. The respiratory chain contains 3 multisubunit complexes succinate dehydrogenase (complex II, CII), ubiquinol-cytochrome c oxidoreductase (cytochrome b-c1 complex, complex III, CIII) and cytochrome c oxidase (complex IV, CIV), that cooperate to transfer electrons derived from NADH and succinate to molecular oxygen, creating an electrochemical gradient over the inner membrane that drives transmembrane transport and the ATP synthase. The cytochrome b-c1 complex catalyzes electron transfer from ubiquinol to cytochrome c, linking this redox reaction to translocation of protons across the mitochondrial inner membrane, with protons being carried across the membrane as hydrogens on the quinol. In the process called Q cycle, 2 protons are consumed from the matrix, 4 protons are released into the intermembrane space and 2 electrons are passed to cytochrome c. This Macaca fascicularis (Crab-eating macaque) protein is Cytochrome b-c1 complex subunit 6, mitochondrial (UQCRH).